Consider the following 321-residue polypeptide: GDP-L-fucose synthase (321 aa).

14 to 20 lines the NADP(+) pocket; that stretch reads GGSGLVG. The active-site Proton donor/acceptor is tyrosine 143. Residues lysine 147, 170–173, and histidine 186 contribute to the NADP(+) site; that span reads PTNV. Substrate contacts are provided by lysine 194, tryptophan 208, arginine 215, and aspartate 277.

This sequence belongs to the NAD(P)-dependent epimerase/dehydratase family. Fucose synthase subfamily. Homodimer.

The enzyme catalyses GDP-beta-L-fucose + NADP(+) = GDP-4-dehydro-alpha-D-rhamnose + NADPH + H(+). It participates in nucleotide-sugar biosynthesis; GDP-L-fucose biosynthesis via de novo pathway; GDP-L-fucose from GDP-alpha-D-mannose: step 2/2. In terms of biological role, catalyzes the two-step NADP-dependent conversion of GDP-4-dehydro-6-deoxy-D-mannose to GDP-fucose, involving an epimerase and a reductase reaction. This Mus musculus (Mouse) protein is GDP-L-fucose synthase.